We begin with the raw amino-acid sequence, 95 residues long: Large ribosomal subunit protein bL28 (95 aa).

This sequence belongs to the bacterial ribosomal protein bL28 family.

The polypeptide is Large ribosomal subunit protein bL28 (Orientia tsutsugamushi (strain Ikeda) (Rickettsia tsutsugamushi)).